The primary structure comprises 212 residues: Leucine efflux protein (212 aa).

Transmembrane regions (helical) follow at residues 12–32, 49–69, 71–91, 122–142, 153–173, and 188–208; these read TYLVGAIFIVLVPGPNTLFVL, GVFIGDAVLMFLAWAGVATLI, TTPILFNIVRYLGAFYLLYLG, ILSLTNPKAILFYVSFFVQFI, FFILATTLELVSFCYLSFLII, and LAKVGNSLIGLMFVGFAARLA.

It belongs to the Rht family.

The protein resides in the cell inner membrane. It carries out the reaction L-leucine(in) + H(+)(out) = L-leucine(out) + H(+)(in). Its function is as follows. Exporter of leucine. This is Leucine efflux protein (leuE) from Escherichia coli O6:K15:H31 (strain 536 / UPEC).